The following is a 384-amino-acid chain: Toluene efflux pump periplasmic linker protein TtgA (384 aa).

The N-terminal stretch at 1–22 (MQFKPAVTALVSAVALATLLSG) is a signal peptide. A lipid anchor (N-palmitoyl cysteine) is attached at cysteine 23. The S-diacylglycerol cysteine moiety is linked to residue cysteine 23. The stretch at 115-155 (LAERYKQLIDEQAVSKQEYDDANAKRLQAEASLKSAQIDLR) forms a coiled coil. The disordered stretch occupies residues 362-384 (ATNVKKPAGPDQANAAKADAKAE). The span at 368–378 (PAGPDQANAAK) shows a compositional bias: low complexity.

It belongs to the membrane fusion protein (MFP) (TC 8.A.1) family.

It localises to the cell inner membrane. In terms of biological role, the periplasmic linker protein component of a constitutive organic solvent efflux system. Involved in export of toluene, styrene, m-xylene, propylbenzene and ethylbenzene. Also exports AMP and the antibiotics carbenicillin, nalidixic acid, chloramphenicol and tetracycline. The polypeptide is Toluene efflux pump periplasmic linker protein TtgA (ttgA) (Pseudomonas putida (strain DOT-T1E)).